An 873-amino-acid chain; its full sequence is DNA mismatch repair protein MutS (873 aa).

625 to 632 (GPNMGGKS) contacts ATP.

Belongs to the DNA mismatch repair MutS family.

Functionally, this protein is involved in the repair of mismatches in DNA. It is possible that it carries out the mismatch recognition step. This protein has a weak ATPase activity. The chain is DNA mismatch repair protein MutS from Xanthomonas campestris pv. campestris (strain 8004).